The sequence spans 425 residues: Serine--tRNA ligase (425 aa).

227–229 lines the L-serine pocket; it reads TAE. Residues 258–260 and Val-274 each bind ATP; that span reads RRE. An L-serine-binding site is contributed by Glu-281. An ATP-binding site is contributed by 347-350; that stretch reads ETHS. L-serine is bound at residue Thr-382.

This sequence belongs to the class-II aminoacyl-tRNA synthetase family. Type-1 seryl-tRNA synthetase subfamily. Homodimer. The tRNA molecule binds across the dimer.

The protein resides in the cytoplasm. The catalysed reaction is tRNA(Ser) + L-serine + ATP = L-seryl-tRNA(Ser) + AMP + diphosphate + H(+). The enzyme catalyses tRNA(Sec) + L-serine + ATP = L-seryl-tRNA(Sec) + AMP + diphosphate + H(+). The protein operates within aminoacyl-tRNA biosynthesis; selenocysteinyl-tRNA(Sec) biosynthesis; L-seryl-tRNA(Sec) from L-serine and tRNA(Sec): step 1/1. Catalyzes the attachment of serine to tRNA(Ser). Is also able to aminoacylate tRNA(Sec) with serine, to form the misacylated tRNA L-seryl-tRNA(Sec), which will be further converted into selenocysteinyl-tRNA(Sec). This Deinococcus radiodurans (strain ATCC 13939 / DSM 20539 / JCM 16871 / CCUG 27074 / LMG 4051 / NBRC 15346 / NCIMB 9279 / VKM B-1422 / R1) protein is Serine--tRNA ligase.